A 548-amino-acid chain; its full sequence is Undecaprenyl phosphate-alpha-4-amino-4-deoxy-L-arabinose arabinosyl transferase 1 (548 aa).

A run of 12 helical transmembrane segments spans residues 11-31, 89-109, 114-134, 137-157, 180-200, 214-234, 263-283, 292-312, 314-334, 347-367, 382-402, and 405-425; these read WLLF…TRLL, IVVV…AMVV, ALAF…AIGT, ILDP…LVAL, FLTK…VMAI, IALL…ALQA, FYIP…FGAL, GTLY…ASKG, LLTY…HYIE, VNAS…IYSL, KIVL…GALF, and TQFL…YAIP.

Belongs to the glycosyltransferase 83 family.

Its subcellular location is the cell inner membrane. The catalysed reaction is 4-amino-4-deoxy-alpha-L-arabinopyranosyl di-trans,octa-cis-undecaprenyl phosphate + lipid IVA = lipid IIA + di-trans,octa-cis-undecaprenyl phosphate.. It participates in lipopolysaccharide metabolism; 4-amino-4-deoxy-beta-L-arabinose-lipid A biosynthesis. In terms of biological role, catalyzes the transfer of the L-Ara4N moiety of the glycolipid undecaprenyl phosphate-alpha-L-Ara4N to lipid A. The modified arabinose is attached to lipid A and is required for resistance to polymyxin and cationic antimicrobial peptides. The polypeptide is Undecaprenyl phosphate-alpha-4-amino-4-deoxy-L-arabinose arabinosyl transferase 1 (Proteus mirabilis (strain HI4320)).